Reading from the N-terminus, the 509-residue chain is tRNA-2-methylthio-N(6)-dimethylallyladenosine synthase (509 aa).

Positions M1–K21 are disordered. Residues R66 to L184 form the MTTase N-terminal domain. C75, C111, C145, C221, C225, and C228 together coordinate [4Fe-4S] cluster. One can recognise a Radical SAM core domain in the interval R207 to K437. Residues K440–G503 enclose the TRAM domain.

Belongs to the methylthiotransferase family. MiaB subfamily. Monomer. [4Fe-4S] cluster serves as cofactor.

The protein localises to the cytoplasm. The catalysed reaction is N(6)-dimethylallyladenosine(37) in tRNA + (sulfur carrier)-SH + AH2 + 2 S-adenosyl-L-methionine = 2-methylsulfanyl-N(6)-dimethylallyladenosine(37) in tRNA + (sulfur carrier)-H + 5'-deoxyadenosine + L-methionine + A + S-adenosyl-L-homocysteine + 2 H(+). Its function is as follows. Catalyzes the methylthiolation of N6-(dimethylallyl)adenosine (i(6)A), leading to the formation of 2-methylthio-N6-(dimethylallyl)adenosine (ms(2)i(6)A) at position 37 in tRNAs that read codons beginning with uridine. The polypeptide is tRNA-2-methylthio-N(6)-dimethylallyladenosine synthase (Bacillus licheniformis (strain ATCC 14580 / DSM 13 / JCM 2505 / CCUG 7422 / NBRC 12200 / NCIMB 9375 / NCTC 10341 / NRRL NRS-1264 / Gibson 46)).